Reading from the N-terminus, the 235-residue chain is Aspartate/glutamate leucyltransferase (235 aa).

The protein belongs to the R-transferase family. Bpt subfamily.

The protein localises to the cytoplasm. The catalysed reaction is N-terminal L-glutamyl-[protein] + L-leucyl-tRNA(Leu) = N-terminal L-leucyl-L-glutamyl-[protein] + tRNA(Leu) + H(+). The enzyme catalyses N-terminal L-aspartyl-[protein] + L-leucyl-tRNA(Leu) = N-terminal L-leucyl-L-aspartyl-[protein] + tRNA(Leu) + H(+). Its function is as follows. Functions in the N-end rule pathway of protein degradation where it conjugates Leu from its aminoacyl-tRNA to the N-termini of proteins containing an N-terminal aspartate or glutamate. The chain is Aspartate/glutamate leucyltransferase from Pseudomonas putida (strain GB-1).